The chain runs to 87 residues: Sigma-K factor-processing regulatory protein BofA (87 aa).

Over 1 to 2 the chain is Forespore intermembrane space; sequence ME. A helical transmembrane segment spans residues 3–23; sequence PIFIIGIILGLVILLFLSGSA. Over 24-36 the chain is Cytoplasmic; the sequence is AKPLKWIGITAVK. Residues 37-57 traverse the membrane as a helical segment; the sequence is FVAGALLLVCVNMFGGSLGIH. Histidine 57 serves as a coordination point for Zn(2+). Residues 58–87 are Forespore intermembrane space-facing; the sequence is VPINLVTTAISGILGIPGIAALVVIKQFII.

Forms a complex with SpoIVFA and SpoIVFB localized in the mother cell membrane surrounding the forespore.

Its subcellular location is the forespore outer membrane. Involved in the mediation of the intercompartmental coupling of pro-sigma K processing to events in the forespore. Inhibits SpoIVFB-processing activity until a signal has been received from the forespore. Could inhibit SpoIVFB metalloprotease activity by coordinating a zinc in the SpoIVFB active site, preventing access of a water molecule and the sequence of pro-sigma K, which are necessary for peptide bond hydrolysis to produce sigma-K. In Bacillus subtilis (strain 168), this protein is Sigma-K factor-processing regulatory protein BofA (bofA).